A 168-amino-acid chain; its full sequence is MNELTSRLNRERRFLVLLGVICLALIGGALYMQVVLGEAPCPLCILQRYALLFIAIFAFIAAAMPGRKSLTFFEVLVVLSAIGGIVAAGNHVYILANPMVSCGIDTLQPIVDDLPLAKLWPLAFQVDGFCSTPYPPILGLSLAQWALVAFVLTTVLVPLGIYRNRRRG.

Residues 1–14 (MNELTSRLNRERRF) are Cytoplasmic-facing. Residues 15-31 (LVLLGVICLALIGGALY) traverse the membrane as a helical segment. Over 32-49 (MQVVLGEAPCPLCILQRY) the chain is Periplasmic. Cys-41 and Cys-44 are joined by a disulfide. A helical transmembrane segment spans residues 50-65 (ALLFIAIFAFIAAAMP). Over 66 to 72 (GRKSLTF) the chain is Cytoplasmic. Residues 73–89 (FEVLVVLSAIGGIVAAG) traverse the membrane as a helical segment. Over 90 to 144 (NHVYILANPMVSCGIDTLQPIVDDLPLAKLWPLAFQVDGFCSTPYPPILGLSLAQ) the chain is Periplasmic. Cys-102 and Cys-130 form a disulfide bridge. A helical transmembrane segment spans residues 145-163 (WALVAFVLTTVLVPLGIYR). The Cytoplasmic segment spans residues 164-168 (NRRRG).

This sequence belongs to the DsbB family.

The protein resides in the cell inner membrane. Required for disulfide bond formation in some periplasmic proteins. Acts by oxidizing the DsbA protein. This is Disulfide bond formation protein B 1 from Pseudomonas entomophila (strain L48).